The following is a 338-amino-acid chain: Solute carrier family 35 member G5 (338 aa).

The disordered stretch occupies residues 1–27 (MAGSHPYFNLPDSTHPSPPSAPPSLRW). 9 consecutive transmembrane segments (helical) span residues 37–57 (TNGL…VGPL), 67–87 (LPSL…ALLL), 102–122 (GWAC…YSAV), 160–180 (CGLL…LWTL), 190–210 (TLGY…LLVY), 221–241 (TVAF…LFVL), 250–270 (LLSW…FTCV), 281–301 (LVCA…YYML), and 305–325 (VALS…IITA). The 126-residue stretch at 49–174 (LPAGFVGPLS…SILGLIIILG (126 aa)) folds into the EamA 1 domain. One can recognise an EamA 2 domain in the interval 272–325 (YAVTKAHPALVCAVLHSEVVVALILQYYMLHETVALSDIMGAGVVLGSIAIITA).

It belongs to the SLC35G solute transporter family. In terms of tissue distribution, expressed in placenta and testis.

Its subcellular location is the membrane. This is Solute carrier family 35 member G5 (SLC35G5) from Homo sapiens (Human).